The following is a 121-amino-acid chain: Large ribosomal subunit protein bL12 (121 aa).

Belongs to the bacterial ribosomal protein bL12 family. As to quaternary structure, homodimer. Part of the ribosomal stalk of the 50S ribosomal subunit. Forms a multimeric L10(L12)X complex, where L10 forms an elongated spine to which 2 to 4 L12 dimers bind in a sequential fashion. Binds GTP-bound translation factors.

Functionally, forms part of the ribosomal stalk which helps the ribosome interact with GTP-bound translation factors. Is thus essential for accurate translation. In Macrococcus caseolyticus (strain JCSC5402) (Macrococcoides caseolyticum), this protein is Large ribosomal subunit protein bL12.